A 776-amino-acid polypeptide reads, in one-letter code: Acetone carboxylase alpha subunit (776 aa).

As to quaternary structure, heterohexamer of two alpha, two beta and two gamma subunits. Fe cation is required as a cofactor. Mg(2+) serves as cofactor. The cofactor is Zn(2+). Post-translationally, the N-terminus is blocked.

It carries out the reaction acetone + hydrogencarbonate + 2 ATP + 3 H2O = acetoacetate + 2 AMP + 4 phosphate + 4 H(+). In terms of biological role, catalyzes the carboxylation of acetone to form acetoacetate. Has a reduced activity on butanone, and no activity on 2-pentatone, 3-pentatone, 2-hexanone, chloroacetone, pyruvate, phosphoenolpyruvate, acetaldehyde, propionaldehyde and propylene oxide. The sequence is that of Acetone carboxylase alpha subunit from Xanthobacter autotrophicus (strain ATCC BAA-1158 / Py2).